Reading from the N-terminus, the 165-residue chain is Fibrinogen-binding protein (165 aa).

An N-terminal signal peptide occupies residues 1 to 29; it reads MKNKLIAKSLLTLAAIGITTTTIASTADA.

In terms of assembly, interacts with host fibrinogen alpha chain/FGA. Interacts with host complement protein C3.

Its subcellular location is the secreted. In terms of biological role, extracellular fibrinogen-binding protein that plays an important role in virulence. By interacting with the alpha chain of fibrinogen and its derivative fibrin, enhances a non-functional interaction between fibrinogen and platelets and is responsible for repression of fibrinogen-dependent platelet aggregation. In addition, assembles a fibrinogen protective shield around the bacteria which results in impaired phagocytic clearance by the host. Mechanistically, interacts with host complement C3b deposited on the surface of the bacterium via its C-terminal and then recruits fibrinogen via its N-terminal. This is Fibrinogen-binding protein (fib) from Staphylococcus aureus (strain Newman).